A 438-amino-acid polypeptide reads, in one-letter code: Serine hydroxymethyltransferase (438 aa).

133–135 is a (6S)-5,6,7,8-tetrahydrofolate binding site; it reads GHI. Lys239 carries the N6-(pyridoxal phosphate)lysine modification.

The protein belongs to the SHMT family. In terms of assembly, homodimer. Pyridoxal 5'-phosphate serves as cofactor.

It is found in the cytoplasm. It catalyses the reaction 5,10-methylenetetrahydromethanopterin + glycine + H2O = 5,6,7,8-tetrahydromethanopterin + L-serine. It participates in amino-acid biosynthesis; glycine biosynthesis; glycine from L-serine: step 1/1. Its function is as follows. Catalyzes the reversible interconversion of serine and glycine with tetrahydromethanopterin (H4MPT) serving as the one-carbon carrier. Also exhibits a pteridine-independent aldolase activity toward beta-hydroxyamino acids, producing glycine and aldehydes, via a retro-aldol mechanism. This chain is Serine hydroxymethyltransferase, found in Archaeoglobus fulgidus (strain ATCC 49558 / DSM 4304 / JCM 9628 / NBRC 100126 / VC-16).